The following is a 204-amino-acid chain: ATP phosphoribosyltransferase (204 aa).

This sequence belongs to the ATP phosphoribosyltransferase family. Short subfamily. In terms of assembly, heteromultimer composed of HisG and HisZ subunits.

The protein resides in the cytoplasm. The catalysed reaction is 1-(5-phospho-beta-D-ribosyl)-ATP + diphosphate = 5-phospho-alpha-D-ribose 1-diphosphate + ATP. Its pathway is amino-acid biosynthesis; L-histidine biosynthesis; L-histidine from 5-phospho-alpha-D-ribose 1-diphosphate: step 1/9. Catalyzes the condensation of ATP and 5-phosphoribose 1-diphosphate to form N'-(5'-phosphoribosyl)-ATP (PR-ATP). Has a crucial role in the pathway because the rate of histidine biosynthesis seems to be controlled primarily by regulation of HisG enzymatic activity. In Staphylococcus aureus (strain Mu3 / ATCC 700698), this protein is ATP phosphoribosyltransferase.